Consider the following 642-residue polypeptide: Threonine--tRNA ligase (642 aa).

The TGS domain maps to 1–61 (MPIITLPDGS…EHDASLEIIT (61 aa)). Residues 244-535 (DHRKIGKQLD…LIEEYAGFFP (292 aa)) form a catalytic region. Zn(2+)-binding residues include Cys335, His386, and His512.

It belongs to the class-II aminoacyl-tRNA synthetase family. As to quaternary structure, homodimer. Zn(2+) is required as a cofactor.

It is found in the cytoplasm. The catalysed reaction is tRNA(Thr) + L-threonine + ATP = L-threonyl-tRNA(Thr) + AMP + diphosphate + H(+). In terms of biological role, catalyzes the attachment of threonine to tRNA(Thr) in a two-step reaction: L-threonine is first activated by ATP to form Thr-AMP and then transferred to the acceptor end of tRNA(Thr). Also edits incorrectly charged L-seryl-tRNA(Thr). The protein is Threonine--tRNA ligase of Vibrio cholerae serotype O1 (strain M66-2).